Here is a 326-residue protein sequence, read N- to C-terminus: Diaminopimelate epimerase (326 aa).

The substrate site is built by Asn-13 and Asn-72. Catalysis depends on Cys-81, which acts as the Proton donor. Substrate contacts are provided by residues Gly-82–Asn-83, Asn-169, Asn-205, and Glu-223–Arg-224. Cys-232 acts as the Proton acceptor in catalysis. Gly-233 to Thr-234 contacts substrate.

Belongs to the diaminopimelate epimerase family. In terms of assembly, homodimer.

It is found in the cytoplasm. The enzyme catalyses (2S,6S)-2,6-diaminopimelate = meso-2,6-diaminopimelate. The protein operates within amino-acid biosynthesis; L-lysine biosynthesis via DAP pathway; DL-2,6-diaminopimelate from LL-2,6-diaminopimelate: step 1/1. Catalyzes the stereoinversion of LL-2,6-diaminopimelate (L,L-DAP) to meso-diaminopimelate (meso-DAP), a precursor of L-lysine and an essential component of the bacterial peptidoglycan. The protein is Diaminopimelate epimerase of Enterococcus faecalis (strain ATCC 700802 / V583).